Reading from the N-terminus, the 306-residue chain is Non-specific ribonucleoside hydrolase RihC (306 aa).

His-235 is a catalytic residue.

The protein belongs to the IUNH family. RihC subfamily.

Its function is as follows. Hydrolyzes both purine and pyrimidine ribonucleosides with a broad-substrate specificity. The polypeptide is Non-specific ribonucleoside hydrolase RihC (Salmonella paratyphi B (strain ATCC BAA-1250 / SPB7)).